Consider the following 350-residue polypeptide: S-adenosylmethionine:tRNA ribosyltransferase-isomerase (350 aa).

The protein belongs to the QueA family. As to quaternary structure, monomer.

The protein resides in the cytoplasm. The catalysed reaction is 7-aminomethyl-7-carbaguanosine(34) in tRNA + S-adenosyl-L-methionine = epoxyqueuosine(34) in tRNA + adenine + L-methionine + 2 H(+). Its pathway is tRNA modification; tRNA-queuosine biosynthesis. In terms of biological role, transfers and isomerizes the ribose moiety from AdoMet to the 7-aminomethyl group of 7-deazaguanine (preQ1-tRNA) to give epoxyqueuosine (oQ-tRNA). This is S-adenosylmethionine:tRNA ribosyltransferase-isomerase from Bacillus cereus (strain B4264).